The primary structure comprises 138 residues: Nucleoside diphosphate kinase (138 aa).

ATP is bound by residues K11, F59, R87, T93, R104, and N114. The active-site Pros-phosphohistidine intermediate is the H117.

The protein belongs to the NDK family. Mg(2+) serves as cofactor.

It is found in the cytoplasm. The enzyme catalyses a 2'-deoxyribonucleoside 5'-diphosphate + ATP = a 2'-deoxyribonucleoside 5'-triphosphate + ADP. It carries out the reaction a ribonucleoside 5'-diphosphate + ATP = a ribonucleoside 5'-triphosphate + ADP. In terms of biological role, major role in the synthesis of nucleoside triphosphates other than ATP. The ATP gamma phosphate is transferred to the NDP beta phosphate via a ping-pong mechanism, using a phosphorylated active-site intermediate. This chain is Nucleoside diphosphate kinase, found in Saccharolobus solfataricus (strain ATCC 35092 / DSM 1617 / JCM 11322 / P2) (Sulfolobus solfataricus).